The chain runs to 299 residues: Taste receptor type 2 member 16 (299 aa).

The Extracellular segment spans residues 1–5 (MVPTQ). The helical transmembrane segment at 6–26 (VTIFSIIMYVLESLVIIVQSC) threads the bilayer. Over 27-44 (TTVAVLFREWMHFQRLSP) the chain is Cytoplasmic. The helical transmembrane segment at 45 to 65 (VEIILISLGISHFCLQWTSML) threads the bilayer. At 66–82 (YNFGTYSRPVLLFWKVS) the chain is on the extracellular side. The chain crosses the membrane as a helical span at residues 83 to 103 (VVWEFMNVLTFWLTSLLAVLY). Residues 104-125 (CVKVSSFSHPVFLWLRLKILKL) lie on the Cytoplasmic side of the membrane. A helical transmembrane segment spans residues 126–146 (VLWLLLGALIASCLSIIPSVV). At 147 to 183 (KYHIQMELLTLDHLPKNSSLILRLQMFEWYFSNPFKM) the chain is on the extracellular side. N163 is a glycosylation site (N-linked (GlcNAc...) asparagine). A helical transmembrane segment spans residues 184-204 (IGFGVPFLVFLISIILLTVSL). At 205–233 (VQHWGQMKHYSSSSSSLRAQCTVLKSLAT) the chain is on the cytoplasmic side. A helical transmembrane segment spans residues 234 to 254 (FFIFFTSYFLTIVVSFIGTVF). The Extracellular portion of the chain corresponds to 255-258 (DKKS). The chain crosses the membrane as a helical span at residues 259 to 279 (WFWVCEAVIYGLVCIHFTSLM). Residues 280–299 (MSNPTLKKALRLQFWSPESS) are Cytoplasmic-facing.

This sequence belongs to the G-protein coupled receptor T2R family. In terms of assembly, interacts with RTP3 and RTP4. Expressed in subsets of taste receptor cells of the tongue and palate epithelium and exclusively in gustducin-positive cells. Expressed in the antrum and fundus (part of the stomach), duodenum and in gastric endocrine cells.

The protein resides in the cell membrane. Its function is as follows. Gustducin-coupled receptor implicated in the perception of bitter compounds in the oral cavity and the gastrointestinal tract. Signals through PLCB2 and the calcium-regulated cation channel TRPM5. The polypeptide is Taste receptor type 2 member 16 (Tas2r16) (Rattus norvegicus (Rat)).